Consider the following 648-residue polypeptide: Putative potassium transport protein DDB_G0292412 (648 aa).

The chain crosses the membrane as a helical span at residues 48 to 68 (LFLLVILVQLGSTVLLTLPIV). N-linked (GlcNAc...) asparagine glycosylation occurs at Asn-81. 2 disordered regions span residues 106–145 (HDFK…DDND) and 223–261 (QQQQ…DSQS). Residues 110–129 (DDDDENDNNNNEENDDNDDE) show a composition bias toward acidic residues. Residues 199 to 227 (IIQQQQQQQQQQQQQQQQQQQQQQQQQQQ) adopt a coiled-coil conformation. N-linked (GlcNAc...) asparagine glycosylation is found at Asn-239, Asn-243, Asn-247, Asn-248, Asn-254, and Asn-257. Helical transmembrane passes span 313 to 333 (LLVI…ISIG), 353 to 373 (GWWW…LALF), 385 to 405 (FLLI…PVFL), 443 to 463 (VQLF…MALL), 472 to 491 (NMNY…STRT), and 505 to 525 (SVLL…IISL). Asn-536 carries an N-linked (GlcNAc...) asparagine glycan. 3 consecutive transmembrane segments (helical) span residues 550-570 (IFVP…LLES), 571-591 (GVIT…NVGL), and 592-612 (SISI…MLAG).

The protein belongs to the TrkH potassium transport family.

Its subcellular location is the membrane. In terms of biological role, may function as a potassium transporter. This Dictyostelium discoideum (Social amoeba) protein is Putative potassium transport protein DDB_G0292412.